We begin with the raw amino-acid sequence, 63 residues long: Large ribosomal subunit protein uL30 (63 aa).

Belongs to the universal ribosomal protein uL30 family. In terms of assembly, part of the 50S ribosomal subunit.

This is Large ribosomal subunit protein uL30 from Rickettsia prowazekii (strain Madrid E).